The following is a 376-amino-acid chain: MKDVPAFLQQSQSSGPGQAAVWHRLEELYTKKLWHQLTLQVLDFVQDPCFAQGDGLIKLYENFISEFEHRVNPLSLVEIILHVVRQMTDPNVALTFLEKTREKVKSSDEAVILCKTAIGALKLNIGDLQATKETIEDVEEMLNNLPGVTSVHSRFYDLSSKYYQTIGNHASYYKDALRFLGCVDIKDLPVSEQQERAFTLGLAGLLGEGVFNFGELLMHPVLESLRNTDRQWLIDTLYAFNSGDVDRFQTLKSAWGQQPDLAANEAQLLRKIQLLCLMEMTFTRPANHRQLTFEEIAKSAKITVNKVELLVMKALSVGLVRGSIDEVDKRVHMTWVQPRVLDLQQIKGMKDRLELWCTDVKSMELLVEHQAQDILT.

A PCI domain is found at S171–P338. At K298 the chain carries N6-acetyllysine.

The protein belongs to the proteasome subunit S11 family. In terms of assembly, component of the 19S proteasome regulatory particle complex. The 26S proteasome consists of a 20S core particle (CP) and two 19S regulatory subunits (RP). The regulatory particle is made of a lid composed of 9 subunits including PSMD13, a base containing 6 ATPases and few additional components.

In terms of biological role, component of the 26S proteasome, a multiprotein complex involved in the ATP-dependent degradation of ubiquitinated proteins. This complex plays a key role in the maintenance of protein homeostasis by removing misfolded or damaged proteins, which could impair cellular functions, and by removing proteins whose functions are no longer required. Therefore, the proteasome participates in numerous cellular processes, including cell cycle progression, apoptosis, or DNA damage repair. In Rattus norvegicus (Rat), this protein is 26S proteasome non-ATPase regulatory subunit 13.